The sequence spans 254 residues: MAESGVPVLGFFIIAVLMSAQESWAIKEEHVIIQAEFYLNPDQSGEFMFDFDGDEIFHVDMAKKETVWRLEEFGRFASFEAQGALANIAVDKANLEIMTKRSNNTPITNVPPEVTVLTNSPVELGEPNVLICFIDKFSPPVVKVTWLKNGKPVTTGVSETVFLPREDHLFRKFHYLPFLPSTEDIYDCKVEHWCLDAPLLKHWEFDAPSPLPETTENVVCALGLIVGLVGIIVGTVFIIKGVRKSNAAERRGPL.

The N-terminal stretch at 1–25 (MAESGVPVLGFFIIAVLMSAQESWA) is a signal peptide. The interval 26–109 (IKEEHVIIQA…KRSNNTPITN (84 aa)) is alpha-1. The Extracellular portion of the chain corresponds to 26–216 (IKEEHVIIQA…APSPLPETTE (191 aa)). Asn-103 is a glycosylation site (N-linked (GlcNAc...) asparagine). An alpha-2 region spans residues 110–203 (VPPEVTVLTN…CLDAPLLKHW (94 aa)). The Ig-like C1-type domain maps to 112–204 (PEVTVLTNSP…LDAPLLKHWE (93 aa)). A disulfide bond links Cys-132 and Cys-188. Positions 204-216 (EFDAPSPLPETTE) are connecting peptide. The chain crosses the membrane as a helical span at residues 217-239 (NVVCALGLIVGLVGIIVGTVFII). The Cytoplasmic portion of the chain corresponds to 240–254 (KGVRKSNAAERRGPL). A Glycyl lysine isopeptide (Lys-Gly) (interchain with G-Cter in ubiquitin) cross-link involves residue Lys-244.

It belongs to the MHC class II family. In terms of assembly, heterodimer of an alpha chain and a beta chain.

It localises to the membrane. The sequence is that of Mamu class II histocompatibility antigen, DR alpha chain (Mamu-DRA) from Macaca mulatta (Rhesus macaque).